A 213-amino-acid chain; its full sequence is Uracil phosphoribosyltransferase (213 aa).

Residues Arg78, Arg103, and 130 to 138 (DPMLATGGS) contribute to the 5-phospho-alpha-D-ribose 1-diphosphate site. Residues Ile197 and 202 to 204 (GDA) each bind uracil. Asp203 provides a ligand contact to 5-phospho-alpha-D-ribose 1-diphosphate.

Belongs to the UPRTase family. Mg(2+) serves as cofactor.

The catalysed reaction is UMP + diphosphate = 5-phospho-alpha-D-ribose 1-diphosphate + uracil. Its pathway is pyrimidine metabolism; UMP biosynthesis via salvage pathway; UMP from uracil: step 1/1. With respect to regulation, allosterically activated by GTP. Catalyzes the conversion of uracil and 5-phospho-alpha-D-ribose 1-diphosphate (PRPP) to UMP and diphosphate. The sequence is that of Uracil phosphoribosyltransferase from Cutibacterium acnes (strain DSM 16379 / KPA171202) (Propionibacterium acnes).